Here is a 194-residue protein sequence, read N- to C-terminus: NADH-quinone oxidoreductase subunit B 1 (194 aa).

Cysteine 73, cysteine 74, cysteine 138, and cysteine 168 together coordinate [4Fe-4S] cluster.

The protein belongs to the complex I 20 kDa subunit family. As to quaternary structure, NDH-1 is composed of 14 different subunits. Subunits NuoB, C, D, E, F, and G constitute the peripheral sector of the complex. [4Fe-4S] cluster serves as cofactor.

Its subcellular location is the cell inner membrane. It catalyses the reaction a quinone + NADH + 5 H(+)(in) = a quinol + NAD(+) + 4 H(+)(out). Functionally, NDH-1 shuttles electrons from NADH, via FMN and iron-sulfur (Fe-S) centers, to quinones in the respiratory chain. The immediate electron acceptor for the enzyme in this species is believed to be ubiquinone. Couples the redox reaction to proton translocation (for every two electrons transferred, four hydrogen ions are translocated across the cytoplasmic membrane), and thus conserves the redox energy in a proton gradient. The polypeptide is NADH-quinone oxidoreductase subunit B 1 (Rhizobium etli (strain CIAT 652)).